The sequence spans 64 residues: Large ribosomal subunit protein bL35 (64 aa).

Disordered stretches follow at residues M1–G20 and P37–G64.

The protein belongs to the bacterial ribosomal protein bL35 family.

This Mycobacterium sp. (strain JLS) protein is Large ribosomal subunit protein bL35.